The primary structure comprises 248 residues: Deoxyribose-phosphate aldolase (248 aa).

Asp-106 acts as the Proton donor/acceptor in catalysis. Lys-168 (schiff-base intermediate with acetaldehyde) is an active-site residue. The active-site Proton donor/acceptor is the Lys-197.

The protein belongs to the DeoC/FbaB aldolase family. DeoC type 1 subfamily.

The protein resides in the cytoplasm. The catalysed reaction is 2-deoxy-D-ribose 5-phosphate = D-glyceraldehyde 3-phosphate + acetaldehyde. The protein operates within carbohydrate degradation; 2-deoxy-D-ribose 1-phosphate degradation; D-glyceraldehyde 3-phosphate and acetaldehyde from 2-deoxy-alpha-D-ribose 1-phosphate: step 2/2. Catalyzes a reversible aldol reaction between acetaldehyde and D-glyceraldehyde 3-phosphate to generate 2-deoxy-D-ribose 5-phosphate. The sequence is that of Deoxyribose-phosphate aldolase from Sinorhizobium medicae (strain WSM419) (Ensifer medicae).